Here is a 208-residue protein sequence, read N- to C-terminus: Small ribosomal subunit protein uS4 (208 aa).

Positions 98–161 (QRLDNVVYRM…KTNSQILRAI (64 aa)) constitute an S4 RNA-binding domain.

Belongs to the universal ribosomal protein uS4 family. As to quaternary structure, part of the 30S ribosomal subunit. Contacts protein S5. The interaction surface between S4 and S5 is involved in control of translational fidelity.

Functionally, one of the primary rRNA binding proteins, it binds directly to 16S rRNA where it nucleates assembly of the body of the 30S subunit. Its function is as follows. With S5 and S12 plays an important role in translational accuracy. The chain is Small ribosomal subunit protein uS4 from Sulfurovum sp. (strain NBC37-1).